The primary structure comprises 602 residues: Trichothecene efflux pump TRI12 (602 aa).

Transmembrane regions (helical) follow at residues 49–69, 77–97, 107–127, and 134–154; these read LTLLSTYFAFEASAAAISFII, NVSLFSTVWTVSQSISILLMG, GFILGTNCVGIIGGIGCLYSF, and IGAQVLLGLAAGQPGACILFI. An N-linked (GlcNAc...) asparagine glycan is attached at N160. 11 helical membrane-spanning segments follow: residues 164-184, 196-216, 240-260, 271-291, 297-317, 355-375, 380-400, 408-428, 450-470, 484-504, and 532-552; these read FLGNVIVAFPNVIATGFGPYI, WIFYIYIIITAVSTVLAFIFY, WIGAFFLTAGMTLFLLGVSWG, ILGLLISGIVSCVIFVLYECY, PIIPMEFFPGTFAGFGCMLLI, STAGFGIWAGIVTLGSLFHIF, WQLIFGSAWVTAFLGAMASVN, IAFSICTGFVIGWAEDVTMLL, AICGSIFTAAFISLYTIKFPG, WGFPGVLLVAGFAYWRALTGQ, and AAAYSYVYYFAMALGVIAIIA. Residue N590 is glycosylated (N-linked (GlcNAc...) asparagine).

This sequence belongs to the major facilitator superfamily.

Its subcellular location is the cell membrane. Functionally, efflux pump that provides the dual role of trichothecene export and self-protection by allowing the fungus to evade the harmful effect of its own trichothecene production. This is Trichothecene efflux pump TRI12 from Trichoderma arundinaceum.